The sequence spans 548 residues: 5-epi-aristolochene synthase (548 aa).

The (2E,6E)-farnesyl diphosphate site is built by Arg-264, Asp-301, Asp-305, Arg-441, and Asp-444. 2 residues coordinate Mg(2+): Asp-301 and Asp-305. A DDXXD motif motif is present at residues 301-305 (DDTFD). Mg(2+)-binding residues include Asp-444, Asp-445, Thr-448, and Glu-452.

The protein belongs to the terpene synthase family. Monomer. Mg(2+) serves as cofactor. Self-alkylated at Tyr-520 in the presence of (2Z,6E)-farnesyl diphosphate ((Z,E)-FPP). Self-alkylated at Asp-444 at warm temperature (42 degrees Celsius) in the presence of (2E,6E)-farnesyl diphosphate ((E,E)-FPP).

It is found in the cytoplasm. It catalyses the reaction (2E,6E)-farnesyl diphosphate = (+)-5-epi-aristolochene + diphosphate. The enzyme catalyses (2Z,6E)-farnesyl diphosphate = (+)-2-epi-prezizaene + diphosphate. It carries out the reaction (2Z,6E)-farnesyl diphosphate = (-)-alpha-cedrene + diphosphate. The catalysed reaction is (2Z,6E)-farnesyl diphosphate = (-)-beta-curcumene + diphosphate. It functions in the pathway secondary metabolite biosynthesis; terpenoid biosynthesis. With respect to regulation, inhibited activity toward farnesyl diphosphate (FPP) by anilinogeranyl diphosphate (AGPP); AGPP undergoes a cyclization event leading to the formation of a novel macrocyclic paracyclophane alkaloid. Repressed by sesquilavandulyl diphosphate (SPP) via the induction of self-alkyation. Its function is as follows. Catalyzes the cyclization of trans,trans-farnesyl diphosphate (FPP) to the bicyclic intermediate 5-epi-aristolochene, initial step in the conversion of FPP to the sesquiterpenoid antifungal phytoalexin capsidiol. Produces germacrene A as an enzyme-bound intermediate that is not released by the enzyme, but is further cyclized to produce the bicyclic 5-epi-aristolochene. Mediates, at low levels, the formation of 4-epi-eremophilene and premnaspirodiene from trans,trans-farnesyl diphosphate. Also mediates the conversion of cis,trans-farnesyl diphosphate to cisoid minor products such as (+)-2-epi-prezizaene, (-)-alpha-cedrene and, to a lesser extent, (-)-beta-curcumene; also produces, at low levels, alpha-acoradiene and 4-epi-alpha-acoradiene, but barely nerolidol, alpha-bisabolol, epi-alpha-bisabolol and cis-farnesol. The polypeptide is 5-epi-aristolochene synthase (EAS3) (Nicotiana tabacum (Common tobacco)).